The sequence spans 662 residues: UvrABC system protein B (662 aa).

In terms of domain architecture, Helicase ATP-binding spans 31 to 188 (DNIEGGEKAQ…NDLVDIQFER (158 aa)). 44-51 (GATGTGKT) provides a ligand contact to ATP. Positions 97 to 120 (YYDYYQPEAYVPSSDTYIEKDSSV) match the Beta-hairpin motif. The region spanning 435-601 (QIDDLLGEIN…TIKKEIRDLI (167 aa)) is the Helicase C-terminal domain. The 36-residue stretch at 626-661 (KDMIKKLEGQMQEAAGLLDFELAAQIRDMILEIKAM) folds into the UVR domain.

The protein belongs to the UvrB family. Forms a heterotetramer with UvrA during the search for lesions. Interacts with UvrC in an incision complex.

It is found in the cytoplasm. In terms of biological role, the UvrABC repair system catalyzes the recognition and processing of DNA lesions. A damage recognition complex composed of 2 UvrA and 2 UvrB subunits scans DNA for abnormalities. Upon binding of the UvrA(2)B(2) complex to a putative damaged site, the DNA wraps around one UvrB monomer. DNA wrap is dependent on ATP binding by UvrB and probably causes local melting of the DNA helix, facilitating insertion of UvrB beta-hairpin between the DNA strands. Then UvrB probes one DNA strand for the presence of a lesion. If a lesion is found the UvrA subunits dissociate and the UvrB-DNA preincision complex is formed. This complex is subsequently bound by UvrC and the second UvrB is released. If no lesion is found, the DNA wraps around the other UvrB subunit that will check the other stand for damage. The protein is UvrABC system protein B of Streptococcus sanguinis (strain SK36).